Consider the following 1270-residue polypeptide: Myosin-3 (1270 aa).

Residues 1-20 form a disordered region; the sequence is MAVIKKGARRKDVKEPKKRS. Positions 36 to 715 constitute a Myosin motor domain; that stretch reads VGVSDLTLLS…SLFALEDMRD (680 aa). Residue 129–136 coordinates ATP; sequence GESGAGKT. Ser-357 bears the Phosphoserine mark. The interval 404–486 is actin-binding; it reads SIGILDIYGF…PGILAAMNDS (83 aa). IQ domains lie at 719 to 739 and 740 to 765; these read YNMA…RIDA and AIKI…YGTK. One can recognise a TH1 domain in the interval 771-961; that stretch reads KERRSMSLLG…TIYVRRGHPA (191 aa). Disordered stretches follow at residues 951-1015, 1029-1136, and 1215-1270; these read STIY…QKPV, YNPK…GSSS, and VQFG…DDDW. The span at 980-1000 shows a compositional bias: basic residues; the sequence is IKSKKSKHKSTHKHTHSHRSH. The span at 1066–1078 shows a compositional bias: low complexity; the sequence is KKASSSHKSSSAK. A compositionally biased stretch (basic and acidic residues) spans 1089 to 1098; the sequence is GVEKNKEPLK. The span at 1107–1116 shows a compositional bias: pro residues; it reads PIPPPPPPMG. An SH3 domain is found at 1118–1180; that stretch reads PKDPKFEAAY…PTAYMTPYKD (63 aa). Residues 1215-1234 are compositionally biased toward polar residues; that stretch reads VQFGSATVGPTSDNQSNPVG. Positions 1256–1270 are enriched in acidic residues; sequence ADDDDNDDGDDDDDW.

This sequence belongs to the TRAFAC class myosin-kinesin ATPase superfamily. Myosin family. Interacts (via myosin motor domain) with SHE4; this interaction is important for proper localization and may regulate the interaction of the motor domain with actin. Interacts (via SH3 domain) with VRP1; this interaction is required for localization to sites of polarized growth and may regulate the interaction of the tail domain with actin. Interacts (via SH3 domain) with PAN1; this interaction is important for late stages of endocytopsis. Interacts (via SH3 domain) with BBC1 and LAS17. Interacts (via C-terminal acidic tail) with ARC19 and ARC40; ARC19 and ARC40 are Arp2/3 complex subunits. Phosphorylation of the TEDS site (Ser-357) is required for the polarization of the actin cytoskeleton and for ligand-induced, but not for constitutive internalization of STE2. Phosphorylation probably activates the myosin-I ATPase. Ser-357 is phosphorylated by CLA4 and STE20 in vitro.

It is found in the cytoplasm. Its subcellular location is the cytoskeleton. The protein resides in the actin patch. One of two redundant type-I myosins implicated in the organization of the actin cytoskeleton. Required for proper actin cytoskeleton polarization and for the internalization step in endocytosis. At the cell cortex, assembles in patch-like structures together with proteins from the actin-polymerizing machinery and promotes actin assembly. Functions redundantly with LAS17 as actin nucleation-promoting factor (NPF) for the Arp2/3 complex. Motor domain phosphorylation by PAK kinases CLA4 and STE20 promotes CDC42-regulated actin assembly. Functions together with the NPF PAN1 in late stages of endocytosis. Motor domain phosphorylation by PDK1 kinases PKH1 and PKH2, and by SGK kinases YPK1 and YPK2, promotes ligand-induced, but not constitutive endocytosis of the G protein-coupled receptor STE2. In Saccharomyces cerevisiae (strain YJM789) (Baker's yeast), this protein is Myosin-3 (MYO3).